A 542-amino-acid chain; its full sequence is Mitochondrial distribution and morphology protein 34 (542 aa).

Positions 1–216 (MSFRFNKGAF…LPSVIFSMSQ (216 aa)) constitute an SMP-LTD domain. 2 disordered regions span residues 27–58 (LNSK…TRGP) and 372–435 (SSGD…TTAV). The span at 31 to 48 (TQSSSQTAPANTTNSAAT) shows a compositional bias: low complexity. Residues 49–58 (DEVKQETRGP) show a composition bias toward basic and acidic residues. Basic residues predominate over residues 379–394 (IRRRKIKMGKKSKSKK). Over residues 403–414 (SSPTVVMPSSPS) the composition is skewed to low complexity.

It belongs to the MDM34 family. In terms of assembly, component of the ER-mitochondria encounter structure (ERMES) or MDM complex, composed of MMM1, MDM10, MDM12 and MDM34.

Its subcellular location is the mitochondrion outer membrane. Its function is as follows. Component of the ERMES/MDM complex, which serves as a molecular tether to connect the endoplasmic reticulum (ER) and mitochondria. Components of this complex are involved in the control of mitochondrial shape and protein biogenesis, and function in nonvesicular lipid trafficking between the ER and mitochondria. MDM34 is required for the interaction of the ER-resident membrane protein MMM1 and the outer mitochondrial membrane-resident beta-barrel protein MDM10. This chain is Mitochondrial distribution and morphology protein 34, found in Lachancea thermotolerans (strain ATCC 56472 / CBS 6340 / NRRL Y-8284) (Yeast).